Here is a 152-residue protein sequence, read N- to C-terminus: MITTAAPDFAAALPNGGRLAGLDVGTKTIGVALCDAGWSFASPDKTIVRKRFSADLDALKALVAGQAVVGLVVGLPLNMDGSDSPRTQSTRAFARNLAPLGLPVLLWDERWSTAAVERAMIAADVSRAKRAERIDSAAAAFILQGAIDAMTR.

It belongs to the YqgF nuclease family.

Its subcellular location is the cytoplasm. Its function is as follows. Could be a nuclease involved in processing of the 5'-end of pre-16S rRNA. This is Putative pre-16S rRNA nuclease from Sphingopyxis alaskensis (strain DSM 13593 / LMG 18877 / RB2256) (Sphingomonas alaskensis).